Consider the following 344-residue polypeptide: Inositol 2-dehydrogenase/D-chiro-inositol 3-dehydrogenase (344 aa).

It belongs to the Gfo/Idh/MocA family. In terms of assembly, homotetramer.

The catalysed reaction is myo-inositol + NAD(+) = scyllo-inosose + NADH + H(+). It carries out the reaction 1D-chiro-inositol + NAD(+) = scyllo-inosine + NADH + H(+). It participates in polyol metabolism; myo-inositol degradation into acetyl-CoA; acetyl-CoA from myo-inositol: step 1/7. Functionally, involved in the oxidation of myo-inositol (MI) and D-chiro-inositol (DCI) to 2-keto-myo-inositol (2KMI or 2-inosose) and 1-keto-D-chiro-inositol (1KDCI), respectively. The sequence is that of Inositol 2-dehydrogenase/D-chiro-inositol 3-dehydrogenase from Bacillus licheniformis (strain ATCC 14580 / DSM 13 / JCM 2505 / CCUG 7422 / NBRC 12200 / NCIMB 9375 / NCTC 10341 / NRRL NRS-1264 / Gibson 46).